Here is a 72-residue protein sequence, read N- to C-terminus: UPF0270 protein YheU (72 aa).

It belongs to the UPF0270 family.

The polypeptide is UPF0270 protein YheU (Escherichia fergusonii (strain ATCC 35469 / DSM 13698 / CCUG 18766 / IAM 14443 / JCM 21226 / LMG 7866 / NBRC 102419 / NCTC 12128 / CDC 0568-73)).